The sequence spans 143 residues: MIEDKFMRVLLMFDVPTKSKKEQKLASKFRNNLIKLGYFMLQFSVYMRICKGLSSAKSSIENVKKILPPYGNVRALIITEKQFDKMELLLGGIVFNEKVNNETNLTLFDIDSHGEFKYKNSNNEEIQINKKQEKYHQQNLFEF.

Asp14 lines the Mg(2+) pocket.

Belongs to the CRISPR-associated endoribonuclease Cas2 protein family. Homodimer, forms a heterotetramer with a Cas1 homodimer. Mg(2+) is required as a cofactor.

Functionally, CRISPR (clustered regularly interspaced short palindromic repeat), is an adaptive immune system that provides protection against mobile genetic elements (viruses, transposable elements and conjugative plasmids). CRISPR clusters contain sequences complementary to antecedent mobile elements and target invading nucleic acids. CRISPR clusters are transcribed and processed into CRISPR RNA (crRNA). Functions as a ssRNA-specific endoribonuclease. Involved in the integration of spacer DNA into the CRISPR cassette. In Campylobacter jejuni subsp. jejuni serotype O:2 (strain ATCC 700819 / NCTC 11168), this protein is CRISPR-associated endoribonuclease Cas2.